The following is a 529-amino-acid chain: Bifunctional purine biosynthesis protein PurH (529 aa).

Residues 1 to 148 enclose the MGS-like domain; sequence MQQRRPVRRA…KNHKDVAIVV (148 aa).

Belongs to the PurH family.

It carries out the reaction (6R)-10-formyltetrahydrofolate + 5-amino-1-(5-phospho-beta-D-ribosyl)imidazole-4-carboxamide = 5-formamido-1-(5-phospho-D-ribosyl)imidazole-4-carboxamide + (6S)-5,6,7,8-tetrahydrofolate. It catalyses the reaction IMP + H2O = 5-formamido-1-(5-phospho-D-ribosyl)imidazole-4-carboxamide. The protein operates within purine metabolism; IMP biosynthesis via de novo pathway; 5-formamido-1-(5-phospho-D-ribosyl)imidazole-4-carboxamide from 5-amino-1-(5-phospho-D-ribosyl)imidazole-4-carboxamide (10-formyl THF route): step 1/1. Its pathway is purine metabolism; IMP biosynthesis via de novo pathway; IMP from 5-formamido-1-(5-phospho-D-ribosyl)imidazole-4-carboxamide: step 1/1. The protein is Bifunctional purine biosynthesis protein PurH of Salmonella newport (strain SL254).